Here is a 155-residue protein sequence, read N- to C-terminus: MRCPFCGHDETQVKDSRPSEDGAAIRRRRLCPQCEGRFTTFERVQLREITILKRSGRRTPFDRDKLARSISIALRKRPVEPERIERMISTIVRQLESMGETELPSSTIGELVMKQLKQLDDVAYVRYASVYRDFRETQDFARFLGEEGLSEAAES.

The disordered stretch occupies residues 1–22; it reads MRCPFCGHDETQVKDSRPSEDG. Residues 3-34 fold into a zinc finger; the sequence is CPFCGHDETQVKDSRPSEDGAAIRRRRLCPQC. The segment covering 7–22 has biased composition (basic and acidic residues); it reads GHDETQVKDSRPSEDG. One can recognise an ATP-cone domain in the interval 49 to 139; sequence ITILKRSGRR…VYRDFRETQD (91 aa).

Belongs to the NrdR family. Zn(2+) is required as a cofactor.

Its function is as follows. Negatively regulates transcription of bacterial ribonucleotide reductase nrd genes and operons by binding to NrdR-boxes. In Phenylobacterium zucineum (strain HLK1), this protein is Transcriptional repressor NrdR.